A 176-amino-acid polypeptide reads, in one-letter code: Oxaleimides biosynthesis cluster protein N (176 aa).

The next 4 membrane-spanning stretches (helical) occupy residues 5–25 (LLVVSAGSLALKVLRVTPLIT), 71–91 (VWTGVISIVLFTRVALILNLF), 104–124 (FLYGVGLFLSFAHLSVAPKML), and 155–175 (FWIVDVPFWVVGVWATLEGLK).

It localises to the membrane. It participates in secondary metabolite biosynthesis. Its function is as follows. Part of the gene cluster that mediates the biosynthesis of oxaleimides, cytotoxic compounds containing an unusual disubstituted succinimide moiety. The first step of the pathway is provided by the HR-PKS poxF that serves in a new mode of collaborative biosynthesis with the PKS-NRPS poxE, by providing the olefin containing amino acid substrate via the synthesis of an ACP-bound dec-4-enoate. The cytochrome P450 monooxygenase poxM-catalyzed oxidation at the alpha-position creates the enzyme-bound 2-hydroxydec-4-enoyl-ACP thioester, which may be prone to spontaneous hydrolysis to yield 2-hydroxydec-4-enoic acid due to increased electrophilicity of the carbonyl. 2-hydroxydec-4-enoic acid can then be further oxidized by poxM to yield the alpha-ketoacid 2-oxodec-4-enoicacid, which is reductively aminated by the aminotransferase poxL to yield (S,E)-2-aminodec-4-enoic acid. The Hybrid PKS-NRPS synthetase poxE then performs condensation between the octaketide product of its PKS modules and the amino group of (S,E)-2-aminodec-4-enoic acid which is activated and incorporated by the adenylation domain. The resulting aminoacyl product can be cyclized by the Diels-Alderase PoxQ and reductively released by the reductive (R) domain of poxE to yield an aldehyde intermediate. The released aldehyde is then substrate for a Knoevenagel condensation by the hydrolyase poxO followed by an oxidation at the 5-position of the pyrrolidone ring. The presence of the olefin from the amino acid building block allows for migration of the substituted allyl group to occur. This allylic transposition reaction takes place in a conjugate addition, semipinacol-like fashion to yield a succinimide intermediate. Iterative two-electron oxidations of the C7 methyl of the succinimide intermediate to the carboxylic acid can be catalyzed by one of two remaining cytochrome P450 monooxygenasess poxC or poxD to yield oxaleimide A. Subsequent oxidation yields the maleimide scaffold oxaleimide I. Both oxaleimide A and oxaleimide I can undergo oxidative modifications in the decalin ring to yield the series of products oxaleimides B to H. This Penicillium oxalicum (strain 114-2 / CGMCC 5302) (Penicillium decumbens) protein is Oxaleimides biosynthesis cluster protein N.